A 535-amino-acid chain; its full sequence is Peptide chain release factor 3 (535 aa).

Positions 8–276 (ARRRTFAIIS…ALVEQAPPPG (269 aa)) constitute a tr-type G domain. GTP-binding positions include 17 to 24 (SHPDAGKT), 85 to 89 (DTPGH), and 139 to 142 (NKMD).

This sequence belongs to the TRAFAC class translation factor GTPase superfamily. Classic translation factor GTPase family. PrfC subfamily.

It localises to the cytoplasm. In terms of biological role, increases the formation of ribosomal termination complexes and stimulates activities of RF-1 and RF-2. It binds guanine nucleotides and has strong preference for UGA stop codons. It may interact directly with the ribosome. The stimulation of RF-1 and RF-2 is significantly reduced by GTP and GDP, but not by GMP. The polypeptide is Peptide chain release factor 3 (Bordetella petrii (strain ATCC BAA-461 / DSM 12804 / CCUG 43448)).